The chain runs to 419 residues: Probable pectate lyase C (419 aa).

The first 19 residues, 1 to 19 (MRLTPSLISCLSLLHFTSA), serve as a signal peptide directing secretion. 3 N-linked (GlcNAc...) asparagine glycosylation sites follow: Asn48, Asn164, and Asn201. Arg204 is a catalytic residue. An EF-hand domain is found at 261-296 (NENFHAYVETNYYDSDKDGTLNGSELGVDSTNYGGM). Asp274, Asp276, Asp278, and Thr280 together coordinate Ca(2+). N-linked (GlcNAc...) asparagine glycosylation is present at Asn282. Ca(2+) is bound at residue Glu285. The tract at residues 350-395 (ALISDEADMGGAGDLDQGTTPTDTDGDGIPDDAEAELGTDPNTADS) is disordered. Low complexity predominate over residues 363-372 (DLDQGTTPTD). A compositionally biased stretch (acidic residues) spans 373–386 (TDGDGIPDDAEAEL).

This sequence belongs to the polysaccharide lyase 1 family. Ca(2+) serves as cofactor.

Its subcellular location is the secreted. The catalysed reaction is Eliminative cleavage of (1-&gt;4)-alpha-D-galacturonan to give oligosaccharides with 4-deoxy-alpha-D-galact-4-enuronosyl groups at their non-reducing ends.. Its function is as follows. Pectinolytic enzyme consist of four classes of enzymes: pectin lyase, polygalacturonase, pectin methylesterase and rhamnogalacturonase. Among pectinolytic enzymes, pectin lyase is the most important in depolymerization of pectin, since it cleaves internal glycosidic bonds of highly methylated pectins. Favors pectate, the anion, over pectin, the methyl ester. The protein is Probable pectate lyase C (plyC) of Aspergillus flavus (strain ATCC 200026 / FGSC A1120 / IAM 13836 / NRRL 3357 / JCM 12722 / SRRC 167).